Reading from the N-terminus, the 149-residue chain is Large ribosomal subunit protein bL9 (149 aa).

This sequence belongs to the bacterial ribosomal protein bL9 family.

Binds to the 23S rRNA. In Actinobacillus pleuropneumoniae serotype 3 (strain JL03), this protein is Large ribosomal subunit protein bL9.